We begin with the raw amino-acid sequence, 216 residues long: UPF0711 protein C18orf21 homolog (216 aa).

Disordered stretches follow at residues R118–T185 and S197–L216. Residues L124–S136 show a composition bias toward polar residues. At S126 the chain carries Phosphoserine. T130 and T139 each carry phosphothreonine. 2 stretches are compositionally biased toward polar residues: residues P145 to K157 and T167 to A182. Residues E200–F209 are compositionally biased toward basic and acidic residues.

Belongs to the UPF0711 family.

This chain is UPF0711 protein C18orf21 homolog, found in Bos taurus (Bovine).